The sequence spans 254 residues: Proteasome subunit alpha (254 aa).

The segment at 231–254 (ESGAASADGEAETEAETDSGSDEE) is disordered. Residues 239–254 (GEAETEAETDSGSDEE) are compositionally biased toward acidic residues.

This sequence belongs to the peptidase T1A family. In terms of assembly, the 20S proteasome core is composed of 14 alpha and 14 beta subunits that assemble into four stacked heptameric rings, resulting in a barrel-shaped structure. The two inner rings, each composed of seven catalytic beta subunits, are sandwiched by two outer rings, each composed of seven alpha subunits. The catalytic chamber with the active sites is on the inside of the barrel. Has probably a gated structure, the ends of the cylinder being occluded by the N-termini of the alpha-subunits. Is likely capped by the proteasome-associated ATPase, ARC. The N-terminus is blocked.

The protein resides in the cytoplasm. It functions in the pathway protein degradation; proteasomal Pup-dependent pathway. The formation of the proteasomal ATPase ARC-20S proteasome complex, likely via the docking of the C-termini of ARC into the intersubunit pockets in the alpha-rings, may trigger opening of the gate for substrate entry. Interconversion between the open-gate and close-gate conformations leads to a dynamic regulation of the 20S proteasome proteolysis activity. Peptidolytic activity is completely inhibited by lactacystin, and to a lesser extent, by N-acetyl-Leu-Leu-norleucinal (Ac-LLnL) and benzoyloxycarbonyl-Leu-Leu-Leu-vinylsulfone (Z-LLL-VS) in vitro. In terms of biological role, component of the proteasome core, a large protease complex with broad specificity involved in protein degradation. The S.coelicolor proteasome is able to cleave oligopeptides after hydrophobic residues, but not after basic or acidic residues, thus displaying chymotrypsin-like activity but not trypsin-like activity. This chain is Proteasome subunit alpha, found in Streptomyces coelicolor (strain ATCC BAA-471 / A3(2) / M145).